A 456-amino-acid chain; its full sequence is Phosphomannomutase (456 aa).

S98 serves as the catalytic Phosphoserine intermediate. Mg(2+) contacts are provided by S98, D246, D248, and D250.

It belongs to the phosphohexose mutase family. The cofactor is Mg(2+).

The catalysed reaction is alpha-D-mannose 1-phosphate = D-mannose 6-phosphate. It participates in nucleotide-sugar biosynthesis; GDP-alpha-D-mannose biosynthesis; alpha-D-mannose 1-phosphate from D-fructose 6-phosphate: step 2/2. It functions in the pathway bacterial outer membrane biogenesis; LPS O-antigen biosynthesis. Its function is as follows. Involved in GDP-mannose biosynthesis which serves as the activated sugar nucleotide precursor for mannose residues in cell surface polysaccharides. This enzyme participates in synthesis of the LPS O9 antigen. The polypeptide is Phosphomannomutase (manB) (Escherichia coli).